The following is a 225-amino-acid chain: GrpE protein homolog 2, mitochondrial (225 aa).

Residues 1-32 (MAVRSLWACRLRVQRLLAWSAAWESKGWPLPF) constitute a mitochondrion transit peptide. Lysine 142 is modified (N6-acetyllysine).

The protein belongs to the GrpE family. As to quaternary structure, probable component of the PAM complex at least composed of a mitochondrial HSP70 protein, GRPEL1 or GRPEL2, TIMM44, TIMM16/PAM16 and TIMM14/DNAJC19.

It is found in the mitochondrion matrix. Functionally, essential component of the PAM complex, a complex required for the translocation of transit peptide-containing proteins from the inner membrane into the mitochondrial matrix in an ATP-dependent manner. Seems to control the nucleotide-dependent binding of mitochondrial HSP70 to substrate proteins. Stimulates ATPase activity of mt-HSP70. May also serve to modulate the interconversion of oligomeric (inactive) and monomeric (active) forms of mt-HSP70. The sequence is that of GrpE protein homolog 2, mitochondrial (GRPEL2) from Pongo abelii (Sumatran orangutan).